The following is a 417-amino-acid chain: Gamma-glutamyl phosphate reductase (417 aa).

Belongs to the gamma-glutamyl phosphate reductase family.

The protein resides in the cytoplasm. The catalysed reaction is L-glutamate 5-semialdehyde + phosphate + NADP(+) = L-glutamyl 5-phosphate + NADPH + H(+). The protein operates within amino-acid biosynthesis; L-proline biosynthesis; L-glutamate 5-semialdehyde from L-glutamate: step 2/2. Its function is as follows. Catalyzes the NADPH-dependent reduction of L-glutamate 5-phosphate into L-glutamate 5-semialdehyde and phosphate. The product spontaneously undergoes cyclization to form 1-pyrroline-5-carboxylate. This is Gamma-glutamyl phosphate reductase from Klebsiella pneumoniae (strain 342).